We begin with the raw amino-acid sequence, 962 residues long: SH3 domain-binding protein 4 (962 aa).

Positions 55–114 (GNAKEVIAIKDYCPNNFTTLKFSKGDHLYVLDTSGGEWWYAHNTTEMGYIPSSYVQPLNY) constitute an SH3 1 domain. A phosphoserine mark is found at S131, S245, S250, S278, and S295. The 138-residue stretch at 316–453 (TNIVCKLDSS…LEPCMYLAIV (138 aa)) folds into the ZU5 domain. Phosphoserine is present on S636. The 71-residue stretch at 653–723 (SSLKFGKLLK…HTKNVLVVGK (71 aa)) folds into the SH3 2 domain.

In terms of assembly, homodimer or homooligomer. Interacts with DNM2, EPS15, clathrin, the adapter protein complex 2/AP-2 and TFRC. Interacts with the Rag GTPases RRAGA, RRAGB, RRAGC and RRAGD; the interaction is most probably direct, preferentially occurs with their inactive GDP-bound form and is negatively regulated by amino acids. In terms of processing, phosphorylated upon EGF stimulation. Phosphorylation prevents interaction with DNM2.

It is found in the membrane. Its subcellular location is the clathrin-coated pit. It localises to the cytoplasmic vesicle. The protein resides in the clathrin-coated vesicle. The protein localises to the nucleus. In terms of biological role, may function in transferrin receptor internalization at the plasma membrane through a cargo-specific control of clathrin-mediated endocytosis. Alternatively, may act as a negative regulator of the amino acid-induced TOR signaling by inhibiting the formation of active Rag GTPase complexes. Preferentially binds inactive Rag GTPase complexes and prevents their interaction with the mTORC1 complex inhibiting its relocalization to lysosomes and its activation. Thereby, may indirectly regulate cell growth, proliferation and autophagy. The sequence is that of SH3 domain-binding protein 4 (Sh3bp4) from Mus musculus (Mouse).